The chain runs to 130 residues: Glycine cleavage system H protein (130 aa).

A Lipoyl-binding domain is found at 25 to 106; that stretch reads VALIGITDFA…PFDTWMVKLK (82 aa). Lys-66 carries the post-translational modification N6-lipoyllysine.

The protein belongs to the GcvH family. As to quaternary structure, the glycine cleavage system is composed of four proteins: P, T, L and H. Requires (R)-lipoate as cofactor.

In terms of biological role, the glycine cleavage system catalyzes the degradation of glycine. The H protein shuttles the methylamine group of glycine from the P protein to the T protein. In Leptospira biflexa serovar Patoc (strain Patoc 1 / Ames), this protein is Glycine cleavage system H protein.